The chain runs to 389 residues: Probable protein phosphatase 2C 47 (389 aa).

Residues 76–346 enclose the PPM-type phosphatase domain; that stretch reads RSGSFADIGP…DNLTVIVVCF (271 aa). 4 residues coordinate Mn(2+): aspartate 120, glycine 121, aspartate 294, and aspartate 337.

The protein belongs to the PP2C family. Mg(2+) is required as a cofactor. It depends on Mn(2+) as a cofactor.

The catalysed reaction is O-phospho-L-seryl-[protein] + H2O = L-seryl-[protein] + phosphate. It carries out the reaction O-phospho-L-threonyl-[protein] + H2O = L-threonyl-[protein] + phosphate. The chain is Probable protein phosphatase 2C 47 from Oryza sativa subsp. japonica (Rice).